The sequence spans 457 residues: Proton extrusion protein PxcA (457 aa).

4 consecutive transmembrane segments (helical) span residues phenylalanine 239 to leucine 259, isoleucine 332 to isoleucine 352, glycine 368 to valine 390, and phenylalanine 417 to isoleucine 437.

This sequence belongs to the CemA family.

The protein localises to the cell inner membrane. Required for H(+) efflux immediately after light irradiation to form a rapid H(+) concentration gradient across the thylakoid membranes. Together with PxcL, contributes to transient H(+) uptake following dark to light transition. In Gloeothece citriformis (strain PCC 7424) (Cyanothece sp. (strain PCC 7424)), this protein is Proton extrusion protein PxcA.